The primary structure comprises 1082 residues: Error-prone DNA polymerase (1082 aa).

It belongs to the DNA polymerase type-C family. DnaE2 subfamily.

The protein resides in the cytoplasm. The enzyme catalyses DNA(n) + a 2'-deoxyribonucleoside 5'-triphosphate = DNA(n+1) + diphosphate. DNA polymerase involved in damage-induced mutagenesis and translesion synthesis (TLS). It is not the major replicative DNA polymerase. The polypeptide is Error-prone DNA polymerase (Xanthomonas campestris pv. campestris (strain 8004)).